We begin with the raw amino-acid sequence, 284 residues long: MLATKAKAYWQLTRMNRPIGTLLLLWPTLWSLIIAAKGMPDFDVLVVFILGVVLMRSAGCVINDFADRKVDGHVKRTKQRPLPSGLVSSKEAIVLFLVLAVVSFLLVLTMNPLTIKLSFIGVGLAFIYPFMKRFTHLPQLFLGLAFSWAIPMAWAAQTNELPSIVWFIFVINALWTIAYDTQYAMVDRDDDLKIGIKSTAILFGRFDKLMVGALQLVTLAMLIALGMHYQLGDTFYWALLVSGSLFVYQQHLMRHRDRDLCFQAFLNNNYVGMAVTVGLFITFW.

9 helical membrane-spanning segments follow: residues 19-39 (IGTLLLLWPTLWSLIIAAKGM), 42-62 (FDVLVVFILGVVLMRSAGCVI), 93-113 (IVLFLVLAVVSFLLVLTMNPL), 114-134 (TIKLSFIGVGLAFIYPFMKRF), 136-156 (HLPQLFLGLAFSWAIPMAWAA), 161-181 (LPSIVWFIFVINALWTIAYDT), 209-229 (LMVGALQLVTLAMLIALGMHY), 235-252 (FYWALLVSGSLFVYQQHL), and 264-284 (AFLNNNYVGMAVTVGLFITFW).

The protein belongs to the UbiA prenyltransferase family. Requires Mg(2+) as cofactor.

It is found in the cell inner membrane. It catalyses the reaction all-trans-octaprenyl diphosphate + 4-hydroxybenzoate = 4-hydroxy-3-(all-trans-octaprenyl)benzoate + diphosphate. Its pathway is cofactor biosynthesis; ubiquinone biosynthesis. In terms of biological role, catalyzes the prenylation of para-hydroxybenzoate (PHB) with an all-trans polyprenyl group. Mediates the second step in the final reaction sequence of ubiquinone-8 (UQ-8) biosynthesis, which is the condensation of the polyisoprenoid side chain with PHB, generating the first membrane-bound Q intermediate 3-octaprenyl-4-hydroxybenzoate. This is 4-hydroxybenzoate octaprenyltransferase from Vibrio atlanticus (strain LGP32) (Vibrio splendidus (strain Mel32)).